A 165-amino-acid polypeptide reads, in one-letter code: Cyclic pyranopterin monophosphate synthase (165 aa).

Substrate-binding positions include 75–77 (MCH) and 115–116 (ME). D130 is an active-site residue.

This sequence belongs to the MoaC family. Homohexamer; trimer of dimers.

The enzyme catalyses (8S)-3',8-cyclo-7,8-dihydroguanosine 5'-triphosphate = cyclic pyranopterin phosphate + diphosphate. The protein operates within cofactor biosynthesis; molybdopterin biosynthesis. In terms of biological role, catalyzes the conversion of (8S)-3',8-cyclo-7,8-dihydroguanosine 5'-triphosphate to cyclic pyranopterin monophosphate (cPMP). This Halalkalibacterium halodurans (strain ATCC BAA-125 / DSM 18197 / FERM 7344 / JCM 9153 / C-125) (Bacillus halodurans) protein is Cyclic pyranopterin monophosphate synthase.